Here is a 1135-residue protein sequence, read N- to C-terminus: Eukaryotic translation initiation factor 3 subunit A (1135 aa).

The PCI domain maps to 319 to 501 (LQRMAAHVLL…NSIYFGTDLT (183 aa)). Basic and acidic residues-rich tracts occupy residues 588 to 623 (QNNA…EERE) and 829 to 899 (AAEE…RGGD). 2 disordered regions span residues 588 to 631 (QNNA…QNEI) and 829 to 1135 (AAEE…VKRR). Residue Ser-908 is modified to Phosphoserine. 4 stretches are compositionally biased toward basic and acidic residues: residues 920–971 (ERNE…EPDS), 985–1045 (SRDD…EPQR), 1053–1081 (DAPR…RGDQ), and 1104–1125 (AREE…KAAD).

This sequence belongs to the eIF-3 subunit A family. As to quaternary structure, component of the eukaryotic translation initiation factor 3 (eIF-3) complex. The eIF-3 complex interacts with pix.

The protein resides in the cytoplasm. Its function is as follows. RNA-binding component of the eukaryotic translation initiation factor 3 (eIF-3) complex, which is involved in protein synthesis of a specialized repertoire of mRNAs and, together with other initiation factors, stimulates binding of mRNA and methionyl-tRNAi to the 40S ribosome. The eIF-3 complex specifically targets and initiates translation of a subset of mRNAs involved in cell proliferation. This is Eukaryotic translation initiation factor 3 subunit A from Drosophila erecta (Fruit fly).